We begin with the raw amino-acid sequence, 349 residues long: Short-wave-sensitive opsin 1 (349 aa).

The Extracellular segment spans residues 1-34; that stretch reads MSKMSEEEEFLLFKNISLVGPWDGPQYHLAPVWA. Residue Asn-15 is glycosylated (N-linked (GlcNAc...) asparagine). Residues 35-59 traverse the membrane as a helical segment; sequence FHLQAVFMGFVFFVGTPLNATVLVA. Topologically, residues 60–71 are cytoplasmic; it reads TLRYRKLRQPLN. Residues 72–97 form a helical membrane-spanning segment; the sequence is YILVNVSLGGFIYCIFSVFIVFITSC. The Extracellular segment spans residues 98–111; that stretch reads YGYFVFGRHVCALE. Cysteines 108 and 185 form a disulfide. Residues 112 to 131 form a helical membrane-spanning segment; sequence AFLGCTAGLVTGWSLAFLAF. The Cytoplasmic segment spans residues 132–150; sequence ERYIIICKPFGNFRFSSKH. A helical transmembrane segment spans residues 151–174; that stretch reads ALMVVVATWTIGIGVSIPPFFGWS. Over 175–200 the chain is Extracellular; sequence RFVPEGLQCSCGPDWYTVGTKYYSEY. A helical transmembrane segment spans residues 201–228; that stretch reads YTWFLFIFCYIVPLSLICFSYSQLLGAL. Residues 229–250 lie on the Cytoplasmic side of the membrane; the sequence is RAVAAQQQESASTQKAEREVSH. Residues 251–274 form a helical membrane-spanning segment; that stretch reads MVVVMVGSFCLCYTPYAALAMYIV. Topologically, residues 275–282 are extracellular; that stretch reads NNRNHGVD. Residues 283-307 form a helical membrane-spanning segment; that stretch reads LRLVTIPAFFSKSACVYNPIIYCFM. Lys-294 is modified (N6-(retinylidene)lysine). The Cytoplasmic segment spans residues 308–349; that stretch reads NKQFRACIMEMVCGKPMTDESELSSSQKTEVSTVSSSQVGPN. The tract at residues 327–349 is disordered; that stretch reads ESELSSSQKTEVSTVSSSQVGPN. The segment covering 330-349 has biased composition (polar residues); that stretch reads LSSSQKTEVSTVSSSQVGPN.

This sequence belongs to the G-protein coupled receptor 1 family. Opsin subfamily. In terms of processing, phosphorylated on some or all of the serine and threonine residues present in the C-terminal region.

The protein localises to the cell membrane. The protein resides in the photoreceptor inner segment. It localises to the cell projection. It is found in the cilium. Its subcellular location is the photoreceptor outer segment. The protein localises to the cytoplasm. The protein resides in the perinuclear region. Its function is as follows. Visual pigments are the light-absorbing molecules that mediate vision. They consist of an apoprotein, opsin, covalently linked to cis-retinal. Required for the maintenance of cone outer segment organization in the ventral retina, but not essential for the maintenance of functioning cone photoreceptors. Involved in ensuring correct abundance and localization of retinal membrane proteins. May increase spectral sensitivity in dim light. The protein is Short-wave-sensitive opsin 1 (OPN1SW) of Bos taurus (Bovine).